The chain runs to 318 residues: Ribosomal RNA small subunit methyltransferase H (318 aa).

Residues 37 to 39 (GGH), Asp-57, Phe-83, Asp-104, and Gln-111 contribute to the S-adenosyl-L-methionine site.

It belongs to the methyltransferase superfamily. RsmH family.

The protein resides in the cytoplasm. It catalyses the reaction cytidine(1402) in 16S rRNA + S-adenosyl-L-methionine = N(4)-methylcytidine(1402) in 16S rRNA + S-adenosyl-L-homocysteine + H(+). Functionally, specifically methylates the N4 position of cytidine in position 1402 (C1402) of 16S rRNA. This Neisseria gonorrhoeae (strain ATCC 700825 / FA 1090) protein is Ribosomal RNA small subunit methyltransferase H.